A 335-amino-acid polypeptide reads, in one-letter code: Serine protease 42 (335 aa).

Residues Met-1–Ala-24 form the signal peptide. Residue Asn-67 is glycosylated (N-linked (GlcNAc...) asparagine). Residues Ile-79–Asn-315 enclose the Peptidase S1 domain. A disulfide bridge links Cys-104 with Cys-120. His-119 acts as the Charge relay system in catalysis. An N-linked (GlcNAc...) asparagine glycan is attached at Asn-140. Catalysis depends on Asp-165, which acts as the Charge relay system. The N-linked (GlcNAc...) asparagine glycan is linked to Asn-176. 3 disulfides stabilise this stretch: Cys-199–Cys-273, Cys-232–Cys-253, and Cys-263–Cys-291. The active-site Charge relay system is Ser-267.

This sequence belongs to the peptidase S1 family. As to expression, testis-specific. Mainly detected in round spermatids at all the eminiferous epithelial stages (at protein level).

It is found in the cytoplasm. Its subcellular location is the cell membrane. Its function is as follows. Plays a role in spermatogenesis. Involved in germ cell survival during meiosis. Lacks protease activity in vitro. The protein is Serine protease 42 of Mus musculus (Mouse).